A 279-amino-acid polypeptide reads, in one-letter code: Estrogen receptor beta (279 aa).

In terms of domain architecture, NR LBD spans 27–261 (SPEQLVLTLL…DLLLEMLNAH (235 aa)).

It belongs to the nuclear hormone receptor family. NR3 subfamily. In terms of assembly, binds DNA as a homodimer. Can form a heterodimer with ESR1. Interacts with NCOA1, NCOA3, NCOA5 and NCOA6 coactivators, leading to a strong increase of transcription of target genes. Interacts with UBE1C and AKAP13. Interacts with DNTTIP2. Interacts with CCDC62 in the presence of estradiol/E2; this interaction seems to enhance the transcription of target genes. Interacts with DNAAF4. Interacts with PRMT2. Interacts with CCAR2 (via N-terminus) in a ligand-independent manner. Interacts with RBM39, in the presence of estradiol (E2). Interacts with STUB1/CHIP.

The protein resides in the nucleus. Functionally, nuclear hormone receptor. Binds estrogens with an affinity similar to that of ESR1/ER-alpha, and activates expression of reporter genes containing estrogen response elements (ERE) in an estrogen-dependent manner. This is Estrogen receptor beta (ESR2) from Macaca mulatta (Rhesus macaque).